We begin with the raw amino-acid sequence, 439 residues long: MSYFPAVNHISYEGAKSDNPFAFKFYNPDEIVSGKTMAEHLRFSIAYWHTFTEALSDPFGAGTAIRPWNAYTGMDLAKARVEAAFEFFEKINVPYFCFHDVDIAPEGSSLKETYANLDVIVAMIKDYMKDSNTKLLWNTANNFTHPRFVGGAASSNEADVFAYSAAKVKKGLEIGKELGAENYVFWGGREGYESLLNTDLKLEMDNLGRFFHMAVDYAKEIGFDGQFLIEPKPKEPTTHQYDFDVATGYAFLQHYGLQDSFKFNIEANHATLAGHTFEHELRYARIHHMLGSVDANQGDPLLGWDTDEFPTDLYSTTLAMYEILQNGGLGRGGLNFDAKVRRGSFEADDLFFAHIAGMDSFAIGLKVAQQLIDDRVLEQFVDSRYQSYKEGIGREIVLGNTDFHQLEAHALSLGEIKTRSGRVERIKAIINQYLLNAFA.

Active-site residues include His-99 and Asp-102. Positions 230, 266, 269, 294, 305, 307, and 337 each coordinate Mg(2+).

This sequence belongs to the xylose isomerase family. In terms of assembly, homotetramer. Mg(2+) is required as a cofactor.

It is found in the cytoplasm. The catalysed reaction is alpha-D-xylose = alpha-D-xylulofuranose. The protein is Xylose isomerase of Shouchella clausii (strain KSM-K16) (Alkalihalobacillus clausii).